Reading from the N-terminus, the 95-residue chain is Aspartyl/glutamyl-tRNA(Asn/Gln) amidotransferase subunit C (95 aa).

The protein belongs to the GatC family. Heterotrimer of A, B and C subunits.

It carries out the reaction L-glutamyl-tRNA(Gln) + L-glutamine + ATP + H2O = L-glutaminyl-tRNA(Gln) + L-glutamate + ADP + phosphate + H(+). The catalysed reaction is L-aspartyl-tRNA(Asn) + L-glutamine + ATP + H2O = L-asparaginyl-tRNA(Asn) + L-glutamate + ADP + phosphate + 2 H(+). In terms of biological role, allows the formation of correctly charged Asn-tRNA(Asn) or Gln-tRNA(Gln) through the transamidation of misacylated Asp-tRNA(Asn) or Glu-tRNA(Gln) in organisms which lack either or both of asparaginyl-tRNA or glutaminyl-tRNA synthetases. The reaction takes place in the presence of glutamine and ATP through an activated phospho-Asp-tRNA(Asn) or phospho-Glu-tRNA(Gln). This chain is Aspartyl/glutamyl-tRNA(Asn/Gln) amidotransferase subunit C, found in Bartonella henselae (strain ATCC 49882 / DSM 28221 / CCUG 30454 / Houston 1) (Rochalimaea henselae).